Consider the following 266-residue polypeptide: Type 1 encapsulin shell protein (266 aa).

This sequence belongs to the encapsulin family. Family 1 subfamily. Homomultimeric. This encapsulin nanocompartment is formed by 60 subunits, and encloses one Dyp homohexamer; partially assembled 58-subunit compartments with and without cargo are also purified. May assemble the shell from dimers. Monomers form pentamers, which assemble to form hollow shells with pores 5-8 Angstroms in diameter where 3 pentamers meet.

It localises to the encapsulin nanocompartment. Its function is as follows. Shell component of a type 1 encapsulin nanocompartment. Assembles into proteinaceous shells 23-24 nm in diameter with 2-2.5 nm thick walls. Endogenous cargo protein DyP (dye-decolorizing peroxidase) is targeted to the interior via its C-terminal extension; only 1 DyP hexamer is incorporated into each shell. Empty shells can be isolated in the absence of cargo. Cargo encapsulation probably precedes assembly of the nanocompartment; may assemble or disassemble via dimers, subcomplexes with a distinct preference for even numbers of subunits are detected. Nanocompartments are stable against mechanical forces; loaded nanocompartments are less stable than empty ones. Nanocompartments are stable between pH 5-10; they aggregate at pH 9-10 and start to disassemble at pH 11. They are stable in 1M NaCl, 1 M MgCl(2) and 1M CaCl(2), unstable in 20% DMSO (dimethylsulfoxide) and are stable in 20% but not 40% ethanol. The chain is Type 1 encapsulin shell protein from Brevibacterium linens.